The chain runs to 436 residues: Tryptophan synthase beta chain (436 aa).

At Lys129 the chain carries N6-(pyridoxal phosphate)lysine.

Belongs to the TrpB family. Tetramer of two alpha and two beta chains. Pyridoxal 5'-phosphate serves as cofactor.

The catalysed reaction is (1S,2R)-1-C-(indol-3-yl)glycerol 3-phosphate + L-serine = D-glyceraldehyde 3-phosphate + L-tryptophan + H2O. It participates in amino-acid biosynthesis; L-tryptophan biosynthesis; L-tryptophan from chorismate: step 5/5. In terms of biological role, the beta subunit is responsible for the synthesis of L-tryptophan from indole and L-serine. This chain is Tryptophan synthase beta chain, found in Prochlorococcus marinus (strain MIT 9313).